The sequence spans 445 residues: Proton extrusion protein PxcA (445 aa).

Transmembrane regions (helical) follow at residues 227–247 (FILL…TFLI), 322–342 (AIAN…VVAF), 369–389 (LIIL…WEVI), and 405–425 (FNFL…KYWI).

It belongs to the CemA family.

It is found in the cell inner membrane. Its function is as follows. Required for H(+) efflux immediately after light irradiation to form a rapid H(+) concentration gradient across the thylakoid membranes. Together with PxcL, contributes to transient H(+) uptake following dark to light transition. The protein is Proton extrusion protein PxcA of Microcystis aeruginosa (strain NIES-843 / IAM M-2473).